We begin with the raw amino-acid sequence, 248 residues long: MKILLTNDDGVRAPGLAALAEAMGAIGEVYVVAPDREQSAVGHALTLHHPLRATRIENNIFAVDGTPTDCVNLGIHSLLSFKPDIVVSGINRGGNLGDDITYSGTVSAAMEATLMGIPAIAVSLVTQNDGGNYSAAAAFVVKLAGIVSREGLPDDTFLNVNVPDLPAEQLRHPVITTQGKRSYEGTIVDKVDPRGRSYYWIGTVDLNFSDIEGSDYNAVSRGHISITPLHLDLTNYNSLAALKRWDLT.

Residues aspartate 8, aspartate 9, serine 39, and asparagine 91 each coordinate a divalent metal cation.

This sequence belongs to the SurE nucleotidase family. A divalent metal cation serves as cofactor.

It is found in the cytoplasm. It carries out the reaction a ribonucleoside 5'-phosphate + H2O = a ribonucleoside + phosphate. In terms of biological role, nucleotidase that shows phosphatase activity on nucleoside 5'-monophosphates. The polypeptide is 5'-nucleotidase SurE (Geotalea uraniireducens (strain Rf4) (Geobacter uraniireducens)).